Here is a 35-residue protein sequence, read N- to C-terminus: Photosystem II reaction center protein T (35 aa).

The helical transmembrane segment at 3-23 threads the bilayer; the sequence is ALVYTFLLVSTLGIIFFAIFF.

It belongs to the PsbT family. PSII is composed of 1 copy each of membrane proteins PsbA, PsbB, PsbC, PsbD, PsbE, PsbF, PsbH, PsbI, PsbJ, PsbK, PsbL, PsbM, PsbT, PsbY, PsbZ, Psb30/Ycf12, at least 3 peripheral proteins of the oxygen-evolving complex and a large number of cofactors. It forms dimeric complexes.

It is found in the plastid. It localises to the chloroplast thylakoid membrane. Its function is as follows. Found at the monomer-monomer interface of the photosystem II (PS II) dimer, plays a role in assembly and dimerization of PSII. PSII is a light-driven water plastoquinone oxidoreductase, using light energy to abstract electrons from H(2)O, generating a proton gradient subsequently used for ATP formation. The sequence is that of Photosystem II reaction center protein T from Ceratophyllum demersum (Rigid hornwort).